The sequence spans 314 residues: Synaptophysin (314 aa).

At Met-1 to Pro-25 the chain is on the cytoplasmic side. Residues Val-21–Gly-228 form the MARVEL domain. A helical membrane pass occupies residues Leu-26–Gly-49. The Vesicular segment spans residues Glu-50–Phe-107. N-linked (GlcNAc...) asparagine glycosylation occurs at Asn-59. Tyr-81 is subject to Phosphotyrosine. The helical transmembrane segment at Phe-108–Asn-131 threads the bilayer. Topologically, residues Lys-132–Lys-138 are cytoplasmic. The helical transmembrane segment at Gly-139–Ala-162 threads the bilayer. Residues Lys-163–Ser-200 are Vesicular-facing. The chain crosses the membrane as a helical span at residues Gly-201 to Phe-224. Over Lys-225–Met-314 the chain is Cytoplasmic. Residue Thr-227 is modified to Phosphothreonine. The disordered stretch occupies residues Gly-239–Met-314. Gly residues predominate over residues Ala-254–Gly-264. The repeats, Gly-rich stretch occupies residues Gly-255 to Gly-305. Positions Pro-265 to Pro-282 are enriched in low complexity. Phosphotyrosine occurs at positions 279 and 296. Over residues Ala-283–Gln-303 the composition is skewed to gly residues.

Belongs to the synaptophysin/synaptobrevin family. Homohexamer or homotetramer. Interacts with SRCIN1. Interacts with VAMP2; the interaction is inhibited by interaction of VAPM2 with SEPT8. Post-translationally, ubiquitinated; mediated by SIAH1 or SIAH2 and leading to its subsequent proteasomal degradation. Phosphorylated by SRC.

The protein localises to the cytoplasmic vesicle. It is found in the secretory vesicle. Its subcellular location is the synaptic vesicle membrane. It localises to the synapse. The protein resides in the synaptosome. In terms of biological role, possibly involved in structural functions as organizing other membrane components or in targeting the vesicles to the plasma membrane. Involved in the regulation of short-term and long-term synaptic plasticity. The sequence is that of Synaptophysin (Syp) from Mus musculus (Mouse).